A 476-amino-acid polypeptide reads, in one-letter code: 3-ketoacyl-CoA synthase 12 (476 aa).

An N-terminal signal peptide occupies residues 1–25; sequence MDLLFLFFSLLLSYLFFKIWKLIDS. The 288-residue stretch at 26–313 folds into the FAE domain; sequence KQDKDCYILD…FMLKLLIKKI (288 aa). Catalysis depends on residues cysteine 168, histidine 247, histidine 344, histidine 348, histidine 377, and asparagine 381.

This sequence belongs to the thiolase-like superfamily. Chalcone/stilbene synthases family. Expressed in siliques, flowers and leaves.

The protein resides in the endoplasmic reticulum. The enzyme catalyses a very-long-chain acyl-CoA + malonyl-CoA + H(+) = a very-long-chain 3-oxoacyl-CoA + CO2 + CoA. Its pathway is lipid metabolism; fatty acid biosynthesis. This Arabidopsis thaliana (Mouse-ear cress) protein is 3-ketoacyl-CoA synthase 12.